Here is a 155-residue protein sequence, read N- to C-terminus: Endoribonuclease YbeY (155 aa).

Zn(2+)-binding residues include His-114, His-118, and His-124.

This sequence belongs to the endoribonuclease YbeY family. Requires Zn(2+) as cofactor.

It localises to the cytoplasm. Functionally, single strand-specific metallo-endoribonuclease involved in late-stage 70S ribosome quality control and in maturation of the 3' terminus of the 16S rRNA. The chain is Endoribonuclease YbeY from Escherichia coli O1:K1 / APEC.